The chain runs to 502 residues: Probable cytosol aminopeptidase (502 aa).

Mn(2+) contacts are provided by Lys-269 and Asp-274. Residue Lys-281 is part of the active site. Mn(2+) is bound by residues Asp-292, Asp-351, and Glu-353. Residue Arg-355 is part of the active site.

Belongs to the peptidase M17 family. Mn(2+) is required as a cofactor.

The protein localises to the cytoplasm. It carries out the reaction Release of an N-terminal amino acid, Xaa-|-Yaa-, in which Xaa is preferably Leu, but may be other amino acids including Pro although not Arg or Lys, and Yaa may be Pro. Amino acid amides and methyl esters are also readily hydrolyzed, but rates on arylamides are exceedingly low.. The enzyme catalyses Release of an N-terminal amino acid, preferentially leucine, but not glutamic or aspartic acids.. Its function is as follows. Presumably involved in the processing and regular turnover of intracellular proteins. Catalyzes the removal of unsubstituted N-terminal amino acids from various peptides. The sequence is that of Probable cytosol aminopeptidase from Vibrio campbellii (strain ATCC BAA-1116).